We begin with the raw amino-acid sequence, 201 residues long: UPF0301 protein Avi_1069 (201 aa).

The protein belongs to the UPF0301 (AlgH) family.

The protein is UPF0301 protein Avi_1069 of Allorhizobium ampelinum (strain ATCC BAA-846 / DSM 112012 / S4) (Agrobacterium vitis (strain S4)).